Consider the following 174-residue polypeptide: Shikimate kinase 2 (174 aa).

12–17 (GCGKTT) contacts ATP. The Mg(2+) site is built by threonine 16 and aspartate 32. Aspartate 34, arginine 58, and glycine 79 together coordinate substrate. The interval 112-126 (EAFPEEGQRPTLTGK) is LID domain. Position 120 (arginine 120) interacts with ATP. A substrate-binding site is contributed by arginine 139. Residue glutamine 155 coordinates ATP.

This sequence belongs to the shikimate kinase family. AroL subfamily. Monomer. Mg(2+) is required as a cofactor.

It is found in the cytoplasm. The enzyme catalyses shikimate + ATP = 3-phosphoshikimate + ADP + H(+). The protein operates within metabolic intermediate biosynthesis; chorismate biosynthesis; chorismate from D-erythrose 4-phosphate and phosphoenolpyruvate: step 5/7. In terms of biological role, catalyzes the specific phosphorylation of the 3-hydroxyl group of shikimic acid using ATP as a cosubstrate. This chain is Shikimate kinase 2, found in Enterobacter sp. (strain 638).